The sequence spans 549 residues: Cytoplasmic trehalase (549 aa).

Substrate is bound by residues Arg-168, 175 to 176, Asn-212, 221 to 223, 292 to 294, and Gly-324; these read WD, RSQ, and RDE. Active-site proton donor/acceptor residues include Asp-326 and Glu-509. Position 525 (Glu-525) interacts with substrate.

This sequence belongs to the glycosyl hydrolase 37 family. As to quaternary structure, monomer.

Its subcellular location is the cytoplasm. It catalyses the reaction alpha,alpha-trehalose + H2O = alpha-D-glucose + beta-D-glucose. It participates in glycan degradation; trehalose degradation; D-glucose from alpha,alpha-trehalose: step 1/1. Functionally, hydrolyzes trehalose to glucose. Could be involved, in cells returning to low osmolarity conditions, in the utilization of the accumulated cytoplasmic trehalose, which was synthesized in response to high osmolarity. This chain is Cytoplasmic trehalase, found in Escherichia coli O81 (strain ED1a).